A 457-amino-acid chain; its full sequence is MTQKRLFGTDGIRGTANTAPMTAEIALRVGQAAGLLFTRGDHRHRVIIGKDTRLSGYMIEPALTAGFIGAGMDVTLVGPLPTPAIAMLTRSLRADLGVMISASHNPYEDNGIKLFGPDGEKLSDATEMEIERLLHADLSGQLAAPAALGRAARLEDAAGRYIESAKSTFPKSQRLDGLKIVLDCANGAAYRVAPTVLWELGATVIPLGVSPDGFNINSGCGSTAPDYLCAQVVKHGADLGIALDGDADRLLVSDERGHLVDGDQIIALIARSWSASGRLRGDGVVATVMSNLGLERFLKANGLILDRTRVGDRYVAEQMRATGRNIGGEQSGHVILSDYATTGDGLIAALQILSVLVEEGRPASETCRVFAPLPQKLKNVRYHRDNPLLHPRVKQAIADAESGLNGHGRLLIRRSGTEPLIRVMAEAEDETTVIRIVDELCDIIAVSAESETQVHLS.

Catalysis depends on Ser-103, which acts as the Phosphoserine intermediate. 4 residues coordinate Mg(2+): Ser-103, Asp-244, Asp-246, and Asp-248. At Ser-103 the chain carries Phosphoserine.

The protein belongs to the phosphohexose mutase family. The cofactor is Mg(2+). Activated by phosphorylation.

The catalysed reaction is alpha-D-glucosamine 1-phosphate = D-glucosamine 6-phosphate. Functionally, catalyzes the conversion of glucosamine-6-phosphate to glucosamine-1-phosphate. The polypeptide is Phosphoglucosamine mutase (Granulibacter bethesdensis (strain ATCC BAA-1260 / CGDNIH1)).